The following is a 263-amino-acid chain: MTTTARVPILADSDAETVAVKAIAERWGLPFETTDNDVFQLWLTEGVLALHWLQSPQKMSPLVVDFHQGKAAYRAQNTQLKNEAIAKAVGVTGQFKPSVVDGTAGLGRDAFVLAGLGCNVQLIERHPVVAALLDNGLHRAQKEHDFIGDTCLRMQLIGTDNLFTGSGYTQEPDVVYLDPMYPKTGKQKAQVKKDMQMFQQLVGSDEDADTLLEPAIALAKYRVVVKRPNSAPFLAGREPNSQIKSKKHRFDVYIKRGFHESAN.

S-adenosyl-L-methionine-binding positions include 108 to 109, 124 to 125, and aspartate 178; these read RD and ER.

It belongs to the methyltransferase superfamily. RsmJ family.

The protein resides in the cytoplasm. It carries out the reaction guanosine(1516) in 16S rRNA + S-adenosyl-L-methionine = N(2)-methylguanosine(1516) in 16S rRNA + S-adenosyl-L-homocysteine + H(+). Functionally, specifically methylates the guanosine in position 1516 of 16S rRNA. This is Ribosomal RNA small subunit methyltransferase J from Idiomarina loihiensis (strain ATCC BAA-735 / DSM 15497 / L2-TR).